The primary structure comprises 846 residues: Rho GTPase-activating protein 12 (846 aa).

Residues 12–74 enclose the SH3 domain; the sequence is PGQVYIEVEY…PAQYVKEVTR (63 aa). Over residues 152 to 175 the composition is skewed to polar residues; it reads LTHNNGKFNNDSHSPKVSSQNRTR. The interval 152-241 is disordered; that stretch reads LTHNNGKFNN…PPNQGRPDSP (90 aa). S165 and S176 each carry phosphoserine. Polar residues predominate over residues 191-200; the sequence is TSFSQEQSCD. 3 positions are modified to phosphoserine: S201, S213, and S215. Positions 224-234 are enriched in polar residues; it reads TEQIRATTPPN. Phosphothreonine is present on residues T230 and T231. Residue S240 is modified to Phosphoserine. At Y243 the chain carries Phosphotyrosine. 2 consecutive WW domains span residues 265–298 and 358–391; these read IQINGEWETHKDSSGRCYYYNRGTQERTWKPPRW and DYTNEKWLKHVDDQGRQYYYSADGSRSEWELPKY. The disordered stretch occupies residues 293-316; sequence WKPPRWTRDASISKGDFQNPGDQE. Disordered regions lie at residues 428 to 466 and 580 to 629; these read DTNDKESPTASKPCFPENESSPSSPKHQDTASSPKDQEK and ETDE…TKKN. The span at 445–461 shows a compositional bias: polar residues; sequence NESSPSSPKHQDTASSP. The 113-residue stretch at 463-575 folds into the PH domain; the sequence is DQEKYGLLNV…WFKVLSSTIN (113 aa). Residues 580-590 show a composition bias toward acidic residues; the sequence is ETDEGIEEEIP. S592 is subject to Phosphoserine. Basic and acidic residues predominate over residues 594 to 609; that stretch reads GIEKHDKEKEQKDPKK. Positions 656–844 constitute a Rho-GAP domain; that stretch reads SNLANLCQRE…LILLELSSIF (189 aa).

Functionally, GTPase activator for the Rho-type GTPases by converting them to an inactive GDP-bound state. The chain is Rho GTPase-activating protein 12 (ARHGAP12) from Homo sapiens (Human).